The primary structure comprises 214 residues: Orotate phosphoribosyltransferase (214 aa).

Residues R125, K126, K129, H131, and 151 to 159 contribute to the 5-phospho-alpha-D-ribose 1-diphosphate site; that span reads EDTSTTGNS. T155 and R183 together coordinate orotate.

This sequence belongs to the purine/pyrimidine phosphoribosyltransferase family. PyrE subfamily. As to quaternary structure, homodimer. Mg(2+) serves as cofactor.

The catalysed reaction is orotidine 5'-phosphate + diphosphate = orotate + 5-phospho-alpha-D-ribose 1-diphosphate. It functions in the pathway pyrimidine metabolism; UMP biosynthesis via de novo pathway; UMP from orotate: step 1/2. In terms of biological role, catalyzes the transfer of a ribosyl phosphate group from 5-phosphoribose 1-diphosphate to orotate, leading to the formation of orotidine monophosphate (OMP). The sequence is that of Orotate phosphoribosyltransferase from Tropheryma whipplei (strain TW08/27) (Whipple's bacillus).